We begin with the raw amino-acid sequence, 576 residues long: N-acetylmuramoyl-L-alanine amidase (576 aa).

Residues 1–21 form the signal peptide; sequence MAQGVLWILLGLLLWSDPGTA. N-linked (GlcNAc...) asparagine glycosylation occurs at Asn-77. Phosphoserine is present on Ser-239. A deamidated asparagine mark is found at Asn-274 and Asn-322. N-linked (GlcNAc...) asparagine glycosylation is present at Asn-367. One can recognise an N-acetylmuramoyl-L-alanine amidase domain in the interval 406–532; that stretch reads FLYVHHTYVP…RQLVRTDCPG (127 aa). Position 410 (His-410) interacts with Zn(2+). A disulfide bridge links Cys-419 with Cys-425. N-linked (GlcNAc...) asparagine glycosylation occurs at Asn-485. His-522 and Cys-530 together coordinate Zn(2+). Residues 550–576 form a disordered region; that stretch reads KPRPARSVSKRSRREPPPRTLPATDLQ.

It belongs to the N-acetylmuramoyl-L-alanine amidase 2 family. Requires Zn(2+) as cofactor. In terms of tissue distribution, strongly expressed in liver and fetal liver, and secreted into serum. Expressed to a much lesser extent in transverse colon, lymph nodes, heart, thymus, pancreas, descending colon, stomach and testis. Isoform 2 is not detected in the liver or serum.

Its subcellular location is the secreted. The protein resides in the membrane. The enzyme catalyses Hydrolyzes the link between N-acetylmuramoyl residues and L-amino acid residues in certain cell-wall glycopeptides.. Functionally, may play a scavenger role by digesting biologically active peptidoglycan (PGN) into biologically inactive fragments. Has no direct bacteriolytic activity. The chain is N-acetylmuramoyl-L-alanine amidase (PGLYRP2) from Homo sapiens (Human).